The sequence spans 296 residues: Acetylglutamate kinase (296 aa).

Substrate-binding positions include 68–69, Arg90, and Asn193; that span reads GG.

The protein belongs to the acetylglutamate kinase family. ArgB subfamily.

The protein localises to the cytoplasm. The catalysed reaction is N-acetyl-L-glutamate + ATP = N-acetyl-L-glutamyl 5-phosphate + ADP. The protein operates within amino-acid biosynthesis; L-arginine biosynthesis; N(2)-acetyl-L-ornithine from L-glutamate: step 2/4. Its function is as follows. Catalyzes the ATP-dependent phosphorylation of N-acetyl-L-glutamate. The protein is Acetylglutamate kinase of Acidothermus cellulolyticus (strain ATCC 43068 / DSM 8971 / 11B).